The following is a 304-amino-acid chain: MDAFIATFTSPGPELFQLGPFALRWYGLLIAIAVLIGLNLSSSLARKRGLEQGLISDLLPILVLTAVVGARIYYVAFEWRNYSGDNFWSSINIFGLAIPIPSAMEIWGGGIAIHGALLSGTLAVLIFCRWRRQAFWDVLDVLVPSIALGQAIGRWGNFFNNEAFGVPIKGDLAWKLFIPFVNRPLNYANNEFFHPTFLYESIWNLLVFTLLIVLFQRSNKGLLKLPAGALSCIYLITYSLGRVWIEALRTDPLCLGALPPSCEGGLRIAQLMSLAMMAVGGFGLWWLYGRKRKLPDPGRPKSFA.

The next 4 membrane-spanning stretches (helical) occupy residues 18 to 38 (LGPF…LIGL), 58 to 78 (LLPI…VAFE), 106 to 126 (IWGG…AVLI), and 133 to 153 (QAFW…QAIG). Arg-154 serves as a coordination point for a 1,2-diacyl-sn-glycero-3-phospho-(1'-sn-glycerol). A run of 3 helical transmembrane segments spans residues 195–215 (PTFL…IVLF), 221–241 (GLLK…YSLG), and 268–288 (IAQL…WWLY).

This sequence belongs to the Lgt family.

The protein resides in the cell inner membrane. The enzyme catalyses L-cysteinyl-[prolipoprotein] + a 1,2-diacyl-sn-glycero-3-phospho-(1'-sn-glycerol) = an S-1,2-diacyl-sn-glyceryl-L-cysteinyl-[prolipoprotein] + sn-glycerol 1-phosphate + H(+). Its pathway is protein modification; lipoprotein biosynthesis (diacylglyceryl transfer). Its function is as follows. Catalyzes the transfer of the diacylglyceryl group from phosphatidylglycerol to the sulfhydryl group of the N-terminal cysteine of a prolipoprotein, the first step in the formation of mature lipoproteins. This is Phosphatidylglycerol--prolipoprotein diacylglyceryl transferase from Prochlorococcus marinus (strain MIT 9303).